The sequence spans 111 residues: UPF0125 protein SO_1475 (111 aa).

Positions 88 to 111 (VRRRRADKAKDEGRANKVTGGRVS) are disordered.

It belongs to the UPF0125 (RnfH) family.

In Shewanella oneidensis (strain ATCC 700550 / JCM 31522 / CIP 106686 / LMG 19005 / NCIMB 14063 / MR-1), this protein is UPF0125 protein SO_1475.